The following is a 403-amino-acid chain: Na(+)/H(+) antiporter NhaA (403 aa).

The next 12 membrane-spanning stretches (helical) occupy residues 25-45 (IAGLVLLVSMLVAFFWVNSPF), 70-90 (LILWINEGLMIVFFFLIGLEI), 105-125 (IALPAFAALGGMLVPAAIFLA), 136-156 (GWAVPAATDIVLALALLAMLG), 165-185 (VFLTALAIFDDFGTLVIIALA), 188-208 (EGLSLPSLLMAALGTLALIVL), 213-233 (VASLTAYVLVGVFVWVSVLES), 234-254 (GVHSTLAGVIIAWCIPMRVSG), 269-289 (VALLIVPLFAFFNAGIDLGGV), 302-322 (IILGLFVGKQVGVMLGVGLAV), 340-360 (GAALLSGVGFTMSLFVAGLAF), and 369-389 (VNLAVVVGSVLSATGGLVVLA).

This sequence belongs to the NhaA Na(+)/H(+) (TC 2.A.33) antiporter family.

Its subcellular location is the cell inner membrane. It carries out the reaction Na(+)(in) + 2 H(+)(out) = Na(+)(out) + 2 H(+)(in). Na(+)/H(+) antiporter that extrudes sodium in exchange for external protons. In Maricaulis maris (strain MCS10) (Caulobacter maris), this protein is Na(+)/H(+) antiporter NhaA.